The following is a 406-amino-acid chain: GTPase Obg (406 aa).

The 159-residue stretch at 1–159 (MRFVDEAVIT…REIRLELKVL (159 aa)) folds into the Obg domain. The interval 120–143 (GGEGGLGNTHFKSSTNRAPRKCTT) is disordered. In terms of domain architecture, OBG-type G spans 160–333 (ADVGLLGMPN…VVYYLMDQIE (174 aa)). Residues 166–173 (GMPNAGKS), 191–195 (FTTMV), 213–216 (DIPG), 283–286 (NKLD), and 314–316 (SGL) each bind GTP. The Mg(2+) site is built by Ser-173 and Thr-193. The disordered stretch occupies residues 381–406 (ESMMDDDDDFDDDEDDGDVESIYVRD). Over residues 383-399 (MMDDDDDFDDDEDDGDV) the composition is skewed to acidic residues.

The protein belongs to the TRAFAC class OBG-HflX-like GTPase superfamily. OBG GTPase family. Monomer. Mg(2+) is required as a cofactor.

It localises to the cytoplasm. Functionally, an essential GTPase which binds GTP, GDP and possibly (p)ppGpp with moderate affinity, with high nucleotide exchange rates and a fairly low GTP hydrolysis rate. Plays a role in control of the cell cycle, stress response, ribosome biogenesis and in those bacteria that undergo differentiation, in morphogenesis control. The protein is GTPase Obg of Acinetobacter baumannii (strain SDF).